Here is a 261-residue protein sequence, read N- to C-terminus: uncharacterized protein (261 aa).

A signal peptide spans 1 to 22 (MKSIKRIGLCISLLILIIFVTS). Residue Cys-23 is the site of N-palmitoyl cysteine attachment. Cys-23 is lipidated: S-diacylglycerol cysteine.

The protein belongs to the staphylococcal tandem lipoprotein family.

The protein resides in the cell membrane. This is an uncharacterized protein from Staphylococcus aureus (strain USA300).